The sequence spans 1034 residues: Probable outer membrane protein PmpF (1034 aa).

An N-terminal signal peptide occupies residues 1–25; the sequence is MIKRTSLSFACLSFFYLSTISILQA. 2 stretches are compositionally biased toward low complexity: residues 664 to 673 and 680 to 709; these read SAPTSATSIA and ETFT…ASNS. Residues 664 to 709 are disordered; it reads SAPTSATSIAEQKKTSETFTPSNTTTASIPNIKASAGSGSGSASNS. Residues 755 to 1034 form the Autotransporter domain; the sequence is RSLLPDNSWF…YINAGGALVF (280 aa).

Belongs to the PMP outer membrane protein family.

Its subcellular location is the secreted. It localises to the cell wall. The protein localises to the cell outer membrane. The protein is Probable outer membrane protein PmpF (pmpF) of Chlamydia trachomatis serovar D (strain ATCC VR-885 / DSM 19411 / UW-3/Cx).